A 349-amino-acid chain; its full sequence is S-adenosylmethionine:tRNA ribosyltransferase-isomerase (349 aa).

Belongs to the QueA family. As to quaternary structure, monomer.

It is found in the cytoplasm. The enzyme catalyses 7-aminomethyl-7-carbaguanosine(34) in tRNA + S-adenosyl-L-methionine = epoxyqueuosine(34) in tRNA + adenine + L-methionine + 2 H(+). Its pathway is tRNA modification; tRNA-queuosine biosynthesis. Its function is as follows. Transfers and isomerizes the ribose moiety from AdoMet to the 7-aminomethyl group of 7-deazaguanine (preQ1-tRNA) to give epoxyqueuosine (oQ-tRNA). The polypeptide is S-adenosylmethionine:tRNA ribosyltransferase-isomerase (Pseudomonas fluorescens (strain SBW25)).